The primary structure comprises 1941 residues: Xin actin-binding repeat-containing protein 1 (1941 aa).

The segment at 1–41 (MAEPQKSSKVAIKKMEDDLPPPPIPDSIQVIAPASQDPNPL) is disordered. Xin repeat units lie at residues 108–123 (GEVQ…WALD), 143–158 (GDVK…QSVN), 176–191 (GDVH…QPLD), 215–230 (GDVK…QSLD), 255–270 (GDVK…EPLC), 293–308 (NAVR…QPLD), 331–346 (PDVS…QPLD), 368–383 (ADVT…QALD), 402–417 (GDVK…QPME), 439–454 (GDVK…CPLG), 475–490 (GDVK…LPLD), 510–525 (GNVK…TPLY), 548–563 (GDVK…RPLD), 586–601 (GDVR…QPMD), 624–639 (GDVK…QPMH), 658–673 (ADVK…QPLD), 697–712 (VDVK…EPLG), 736–751 (GEVS…KPLD), 769–784 (GSVH…YPMD), 805–820 (GDVG…YSLD), 842–857 (ANVK…QPLY), 880–895 (GDVK…KPLD), 917–932 (GDVQ…EPLD), 951–966 (GDVQ…QQVG), 982–997 (GDVR…QPVD), 1020–1035 (GDVK…QPMD), and 1055–1070 (ADVK…TPLD). The segment covering 1514-1565 (ASKQETKTLQSTIHQQESASTMRENTSTAIRTSTTRVQEASRTHTSVSQKSI) has biased composition (polar residues). Disordered regions lie at residues 1514–1568 (ASKQ…IASH), 1715–1856 (ASGS…PPPA), and 1914–1941 (YKAR…GEVG). The span at 1820–1833 (SASTNNSTNRSTKS) shows a compositional bias: low complexity. Over residues 1834 to 1843 (VPPPVPPKPP) the composition is skewed to pro residues.

Belongs to the Xin family. As to expression, expressed at intercalated disks in the heart (at protein level).

Its subcellular location is the cell junction. It localises to the adherens junction. The protein localises to the desmosome. Functionally, involved in cardiac morphogenesis, including heart midline formation, cardiac tubule looping, myocardial formation and maintenance of heart beat speed and rhythm. May protect actin filaments from depolymerization. May play a role in development of normal skeletal muscle morphology, muscle fiber type composition and regulation of muscle satellite cell activation and survival. The protein is Xin actin-binding repeat-containing protein 1 of Gallus gallus (Chicken).